The primary structure comprises 334 residues: Phosphoribosylformylglycinamidine cyclo-ligase (334 aa).

This sequence belongs to the AIR synthase family.

It localises to the cytoplasm. The enzyme catalyses 2-formamido-N(1)-(5-O-phospho-beta-D-ribosyl)acetamidine + ATP = 5-amino-1-(5-phospho-beta-D-ribosyl)imidazole + ADP + phosphate + H(+). The protein operates within purine metabolism; IMP biosynthesis via de novo pathway; 5-amino-1-(5-phospho-D-ribosyl)imidazole from N(2)-formyl-N(1)-(5-phospho-D-ribosyl)glycinamide: step 2/2. In Thermococcus kodakarensis (strain ATCC BAA-918 / JCM 12380 / KOD1) (Pyrococcus kodakaraensis (strain KOD1)), this protein is Phosphoribosylformylglycinamidine cyclo-ligase.